Reading from the N-terminus, the 296-residue chain is MRIAVPNKGRLHDPTLSLLERAGLHTEETADRQLYADTVDPDVSILFARAADIPEYVRDGAADVGITGLDQAAESGGVADSASAAGDDDLVDLLDLGYGSCKLVLAAPEDGDISVVADLAGGTVATEFPNITRDYLDRVDVDADVVTVTGATELTPHVDMADAIVDITSTGTTLKVNRLAVIDDVLDSSVRLFARPDMVDDAKVKQVLTAFESVLAADGRRYLMMNAPKERLDEVKDVIPGLGGPTVMDVEADENGNGMVAVHAVVEERDVFATISELKSVGATGILVTKIERLVG.

Belongs to the ATP phosphoribosyltransferase family. Long subfamily. Mg(2+) is required as a cofactor.

It localises to the cytoplasm. The catalysed reaction is 1-(5-phospho-beta-D-ribosyl)-ATP + diphosphate = 5-phospho-alpha-D-ribose 1-diphosphate + ATP. Its pathway is amino-acid biosynthesis; L-histidine biosynthesis; L-histidine from 5-phospho-alpha-D-ribose 1-diphosphate: step 1/9. Feedback inhibited by histidine. Catalyzes the condensation of ATP and 5-phosphoribose 1-diphosphate to form N'-(5'-phosphoribosyl)-ATP (PR-ATP). Has a crucial role in the pathway because the rate of histidine biosynthesis seems to be controlled primarily by regulation of HisG enzymatic activity. This chain is ATP phosphoribosyltransferase, found in Halorubrum lacusprofundi (strain ATCC 49239 / DSM 5036 / JCM 8891 / ACAM 34).